Reading from the N-terminus, the 295-residue chain is Elongation factor Ts (295 aa).

Positions T79 to V82 are involved in Mg(2+) ion dislocation from EF-Tu.

It belongs to the EF-Ts family.

Its subcellular location is the cytoplasm. Functionally, associates with the EF-Tu.GDP complex and induces the exchange of GDP to GTP. It remains bound to the aminoacyl-tRNA.EF-Tu.GTP complex up to the GTP hydrolysis stage on the ribosome. The polypeptide is Elongation factor Ts (Mycoplasma mycoides subsp. mycoides SC (strain CCUG 32753 / NCTC 10114 / PG1)).